We begin with the raw amino-acid sequence, 583 residues long: R-linalool synthase QH5, chloroplastic (583 aa).

Residues 1–40 (MASISLFPYSILKQTSPLARGTAYNRIYSTKTTGITVDVA) constitute a chloroplast transit peptide. The (2E)-geranyl diphosphate site is built by R298, D335, D339, R476, and D479. Positions 335 and 339 each coordinate Mg(2+). The DDXXD motif signature appears at 335 to 339 (DDVYD). Mg(2+) contacts are provided by D479, T483, and E487. D492 provides a ligand contact to K(+).

The protein belongs to the terpene synthase family. Tpsb subfamily. Mg(2+) serves as cofactor. Requires Mn(2+) as cofactor. It depends on K(+) as a cofactor. As to expression, expressed in every aerial organ except for the stem stele of mature plants. Not detected in roots.

Its subcellular location is the plastid. The protein localises to the chloroplast. The catalysed reaction is (2E)-geranyl diphosphate + H2O = (R)-linalool + diphosphate. Its pathway is secondary metabolite biosynthesis; terpenoid biosynthesis. Monoterpene synthase that catalyzes the formation of (3R)-linalool from geranyl diphosphate, but not from isopentenyl diphosphate, dimethylallyl diphosphate, chrysanthemyl diphosphate, farnesyl diphosphate, (+)-copalyl diphosphate or geranylgeranyl diphosphate. This Artemisia annua (Sweet wormwood) protein is R-linalool synthase QH5, chloroplastic.